The primary structure comprises 607 residues: MSENVKKNWIKTIMESMGSLKRTHFCDALRKEDIGKQVILMGWVLRRRDHGGVIFIDLRDRRGITQVVFNPEINPEVHAKAHSLRSEWVLAIKGTVSARPGDMANTKLGTGDIEILVDELVILNTSETPPFPLDEETEVSENLRLQYRYLDLRRPAMARNLLLRHKAVQAIRNYLNDNEFLDIETPMLTRSTPEGARDYLVPSRVSAGKFYALPQSPQLFKQLLMIAGMDRYYQIVKCFRDEDLRADRQPEFTQIDMELSFVDEEQIIEVTEGMIQTLFKETLDLDLTPPFAHITYADSMERFGCDRPDMRFGMELVNLTEIAKSCSFKVFRAIAEEGGTVRAINAKACAHFSRKDLDGLTEYAALFGAKGLAWVKMKADGEWQSPIAKFFSEEERASIAEALDAQEGDLLFFGADSEKVVFQVLGELRLEMARRLDLLDKKEFNFVWVTDFPLMEYDEKEDRYQSIHHPFTAPREEDLDLLETAPDKALSRAYDLVLNGTEIGGGSIRIHQRDVQARVLTALGIDKEEADEKFGFLLRALELGAPPHGGLAFGLDRLMMLITGSDSIRNVIAFPKTQKAACLLTEAPATVARKQLTELYLRPDWKE.

Residue Glu194 coordinates L-aspartate. The segment at 218–221 is aspartate; sequence QLFK. An L-aspartate-binding site is contributed by Arg240. Residues 240–242 and Gln249 each bind ATP; that span reads RDE. An L-aspartate-binding site is contributed by His468. Position 502 (Glu502) interacts with ATP. Position 509 (Arg509) interacts with L-aspartate. 554–557 lines the ATP pocket; that stretch reads GLDR.

This sequence belongs to the class-II aminoacyl-tRNA synthetase family. Type 1 subfamily. Homodimer.

It is found in the cytoplasm. The catalysed reaction is tRNA(Asx) + L-aspartate + ATP = L-aspartyl-tRNA(Asx) + AMP + diphosphate. Aspartyl-tRNA synthetase with relaxed tRNA specificity since it is able to aspartylate not only its cognate tRNA(Asp) but also tRNA(Asn). Reaction proceeds in two steps: L-aspartate is first activated by ATP to form Asp-AMP and then transferred to the acceptor end of tRNA(Asp/Asn). This chain is Aspartate--tRNA(Asp/Asn) ligase, found in Desulfotalea psychrophila (strain LSv54 / DSM 12343).